An 81-amino-acid chain; its full sequence is Costars family protein ABRACL (81 aa).

Belongs to the costars family.

The protein is Costars family protein ABRACL (abracl) of Xenopus tropicalis (Western clawed frog).